Reading from the N-terminus, the 162-residue chain is Cyclic pyranopterin monophosphate synthase (162 aa).

Substrate contacts are provided by residues 75–77 (LCH) and 113–114 (ME). The active site involves Asp-128.

Belongs to the MoaC family. Homohexamer; trimer of dimers.

It carries out the reaction (8S)-3',8-cyclo-7,8-dihydroguanosine 5'-triphosphate = cyclic pyranopterin phosphate + diphosphate. It participates in cofactor biosynthesis; molybdopterin biosynthesis. Functionally, catalyzes the conversion of (8S)-3',8-cyclo-7,8-dihydroguanosine 5'-triphosphate to cyclic pyranopterin monophosphate (cPMP). In Burkholderia vietnamiensis (strain G4 / LMG 22486) (Burkholderia cepacia (strain R1808)), this protein is Cyclic pyranopterin monophosphate synthase.